Here is a 246-residue protein sequence, read N- to C-terminus: uncharacterized protein (246 aa).

This sequence belongs to the BtpA family.

This is an uncharacterized protein from Archaeoglobus fulgidus (strain ATCC 49558 / DSM 4304 / JCM 9628 / NBRC 100126 / VC-16).